The following is a 329-amino-acid chain: Galactosylgalactosylxylosylprotein 3-beta-glucuronosyltransferase 2 (329 aa).

Over 1 to 2 the chain is Cytoplasmic; sequence MK. The chain crosses the membrane as a helical; Signal-anchor for type II membrane protein span at residues 3 to 23; it reads SALFSRFFILLPWILIVIIML. At 24–329 the chain is on the lumenal side; it reads DVDTRRPAPP…YRLDTVKIEV (306 aa). Residues 45 to 87 form a disordered region; sequence VGRGGARLPPRRGGPDSGPGRGWEKRNESRPHARPRPEPPLPT. Positions 66–81 are enriched in basic and acidic residues; sequence GWEKRNESRPHARPRP. N-linked (GlcNAc...) asparagine glycosylation is present at asparagine 71. UDP-alpha-D-glucuronate is bound by residues 93-95, aspartate 124, arginine 161, arginine 166, and 191-193; these read PTY and DDD. A Mn(2+)-binding site is contributed by aspartate 193. Residues 240–249 form an interaction with galactose moiety of substrate glycoprotein region; the sequence is WRADRPFAID. Residue glutamate 279 is the Proton donor/acceptor of the active site. The N-linked (GlcNAc...) asparagine glycan is linked to asparagine 298. Residue 306–308 participates in UDP-alpha-D-glucuronate binding; that stretch reads HTR.

It belongs to the glycosyltransferase 43 family. As to quaternary structure, homodimer. Mn(2+) is required as a cofactor.

The protein resides in the golgi apparatus membrane. It catalyses the reaction 3-O-(beta-D-galactosyl-(1-&gt;3)-beta-D-galactosyl-(1-&gt;4)-beta-D-xylosyl)-L-seryl-[protein] + UDP-alpha-D-glucuronate = 3-O-(beta-D-GlcA-(1-&gt;3)-beta-D-Gal-(1-&gt;3)-beta-D-Gal-(1-&gt;4)-beta-D-Xyl)-L-seryl-[protein] + UDP + H(+). The protein operates within protein modification; protein glycosylation. In terms of biological role, involved in the biosynthesis of L2/HNK-1 carbohydrate epitope on both glycolipids and glycoproteins. This chain is Galactosylgalactosylxylosylprotein 3-beta-glucuronosyltransferase 2 (B3GAT2), found in Canis lupus familiaris (Dog).